The sequence spans 85 residues: Cell division protein ZapA (85 aa).

Positions 59-85 (TAVNVVHDYMKLQEKYEILERQLKEKE) form a coiled coil.

The protein belongs to the ZapA family. Type 2 subfamily. As to quaternary structure, homodimer. Interacts with FtsZ.

It localises to the cytoplasm. In terms of biological role, activator of cell division through the inhibition of FtsZ GTPase activity, therefore promoting FtsZ assembly into bundles of protofilaments necessary for the formation of the division Z ring. It is recruited early at mid-cell but it is not essential for cell division. The chain is Cell division protein ZapA from Bacillus velezensis (strain DSM 23117 / BGSC 10A6 / LMG 26770 / FZB42) (Bacillus amyloliquefaciens subsp. plantarum).